The primary structure comprises 734 residues: Diacylglycerol kinase alpha (734 aa).

2 EF-hand domains span residues 109-144 (RPED…MMRM) and 154-189 (ELRP…TVPL). Asp122, Asp124, Asn126, Glu133, Asp167, Asp169, Ser171, Ser173, and Glu178 together coordinate Ca(2+). 2 consecutive Phorbol-ester/DAG-type zinc fingers follow at residues 204-252 (QHMW…ALPC) and 268-318 (SHVW…GHEC). Positions 371–505 (SNTHPLLVFV…MDRWSVEVIP (135 aa)) constitute a DAGKc domain. Residue Lys483 is modified to N6-acetyllysine.

Belongs to the eukaryotic diacylglycerol kinase family. As to quaternary structure, monomer.

Its subcellular location is the cytoplasm. The protein resides in the cytosol. It carries out the reaction a 1,2-diacyl-sn-glycerol + ATP = a 1,2-diacyl-sn-glycero-3-phosphate + ADP + H(+). The catalysed reaction is a 1-O-alkyl-sn-glycerol + ATP = a 1-O-alkyl-sn-glycero-3-phosphate + ADP + H(+). The enzyme catalyses 1-O-alkyl-2-acyl-sn-glycerol + ATP = 1-O-alkyl-2-acyl-sn-glycero-3-phosphate + ADP + H(+). It catalyses the reaction 1,2-dihexadecanoyl-sn-glycerol + ATP = 1,2-dihexadecanoyl-sn-glycero-3-phosphate + ADP + H(+). It carries out the reaction 1-hexadecanoyl-2-(9Z-octadecenoyl)-sn-glycerol + ATP = 1-hexadecanoyl-2-(9Z-octadecenoyl)-sn-glycero-3-phosphate + ADP + H(+). The catalysed reaction is 2-(9Z-octadecenoyl)-glycerol + ATP = 2-(9Z-octadecenoyl)-sn-glycero-3-phosphate + ADP + H(+). The enzyme catalyses 1,2-di-(9Z-octadecenoyl)-sn-glycerol + ATP = 1,2-di-(9Z-octadecenoyl)-sn-glycero-3-phosphate + ADP + H(+). It catalyses the reaction 1-octadecanoyl-2-(5Z,8Z,11Z,14Z-eicosatetraenoyl)-sn-glycerol + ATP = 1-octadecanoyl-2-(5Z,8Z,11Z,14Z-eicosatetraenoyl)-sn-glycero-3-phosphate + ADP + H(+). It carries out the reaction 1,2-didecanoyl-sn-glycerol + ATP = 1,2-didecanoyl-sn-glycero-3-phosphate + ADP + H(+). The catalysed reaction is 1-O-hexadecyl-2-acetyl-sn-glycerol + ATP = 1-O-hexadecyl-2-acetyl-sn-glycero-3-phosphate + ADP + H(+). The enzyme catalyses 1-O-hexadecyl-2-(5Z,8Z,11Z,14Z-eicosatetraenoyl)-sn-glycerol + ATP = 1-O-hexadecyl-2-(5Z,8Z,11Z,14Z-eicosatetraenoyl)-sn-glycero-3-phosphate + ADP + H(+). It catalyses the reaction 1-O-hexadecyl-2-(9Z-octadecenoyl)-sn-glycerol + ATP = 1-O-hexadecyl-2-(9Z-octadecenoyl)-sn-glycero-3-phosphate + ADP + H(+). It carries out the reaction 1-O-hexadecyl-sn-glycerol + ATP = 1-O-hexadecyl-sn-glycero-3-phosphate + ADP + H(+). Its pathway is lipid metabolism; glycerolipid metabolism. With respect to regulation, stimulated by calcium and phosphatidylserine. Its function is as follows. Diacylglycerol kinase that converts diacylglycerol/DAG into phosphatidic acid/phosphatidate/PA and regulates the respective levels of these two bioactive lipids. Thereby, acts as a central switch between the signaling pathways activated by these second messengers with different cellular targets and opposite effects in numerous biological processes. Also plays an important role in the biosynthesis of complex lipids. Can also phosphorylate 1-alkyl-2-acylglycerol in vitro as efficiently as diacylglycerol provided it contains an arachidonoyl group. Also involved in the production of alkyl-lysophosphatidic acid, another bioactive lipid, through the phosphorylation of 1-alkyl-2-acetyl glycerol. The protein is Diacylglycerol kinase alpha (DGKA) of Bos taurus (Bovine).